Here is a 389-residue protein sequence, read N- to C-terminus: F-box protein At3g19880 (389 aa).

One can recognise an F-box domain in the interval 2-49; that stretch reads TMMSDLTQDLVEEILSRVPITSLGAVRSTCKGWNALSKERILCIGEPK.

The polypeptide is F-box protein At3g19880 (Arabidopsis thaliana (Mouse-ear cress)).